The following is a 232-amino-acid chain: LexA repressor (232 aa).

Over residues 1–10 (MDDSNDSSSA) the composition is skewed to polar residues. Residues 1 to 22 (MDDSNDSSSAGPDGRLHAVDPS) are disordered. Positions 47–67 (IREIGDAVGLTSTSSVAHQLR) form a DNA-binding region, H-T-H motif. Catalysis depends on for autocatalytic cleavage activity residues S156 and K193.

The protein belongs to the peptidase S24 family. As to quaternary structure, homodimer.

It carries out the reaction Hydrolysis of Ala-|-Gly bond in repressor LexA.. Represses a number of genes involved in the response to DNA damage (SOS response), including recA and lexA. In the presence of single-stranded DNA, RecA interacts with LexA causing an autocatalytic cleavage which disrupts the DNA-binding part of LexA, leading to derepression of the SOS regulon and eventually DNA repair. This chain is LexA repressor, found in Mycolicibacterium paratuberculosis (strain ATCC BAA-968 / K-10) (Mycobacterium paratuberculosis).